Reading from the N-terminus, the 142-residue chain is Hemoglobin subunit alpha-2 (142 aa).

N-acetylserine is present on S1. Positions 1–142 constitute a Globin domain; sequence SLSTKDKETV…LSRALSEKYR (142 aa). H59 provides a ligand contact to O2. Residue H88 participates in heme b binding.

This sequence belongs to the globin family. As to quaternary structure, hb2 is a heterotetramer of two alpha-2 chains and two beta chains. In terms of tissue distribution, red blood cells.

Functionally, involved in oxygen transport from gills to the various peripheral tissues. This is Hemoglobin subunit alpha-2 (hba2) from Trematomus newnesi (Dusky notothen).